The primary structure comprises 492 residues: Probable glycine dehydrogenase (decarboxylating) subunit 2 (492 aa).

K274 is subject to N6-(pyridoxal phosphate)lysine.

This sequence belongs to the GcvP family. C-terminal subunit subfamily. As to quaternary structure, the glycine cleavage system is composed of four proteins: P, T, L and H. In this organism, the P 'protein' is a heterodimer of two subunits. It depends on pyridoxal 5'-phosphate as a cofactor.

The enzyme catalyses N(6)-[(R)-lipoyl]-L-lysyl-[glycine-cleavage complex H protein] + glycine + H(+) = N(6)-[(R)-S(8)-aminomethyldihydrolipoyl]-L-lysyl-[glycine-cleavage complex H protein] + CO2. Its function is as follows. The glycine cleavage system catalyzes the degradation of glycine. The P protein binds the alpha-amino group of glycine through its pyridoxal phosphate cofactor; CO(2) is released and the remaining methylamine moiety is then transferred to the lipoamide cofactor of the H protein. The polypeptide is Probable glycine dehydrogenase (decarboxylating) subunit 2 (Staphylococcus saprophyticus subsp. saprophyticus (strain ATCC 15305 / DSM 20229 / NCIMB 8711 / NCTC 7292 / S-41)).